Consider the following 128-residue polypeptide: Large ribosomal subunit protein bL12 (128 aa).

The protein belongs to the bacterial ribosomal protein bL12 family. In terms of assembly, homodimer. Part of the ribosomal stalk of the 50S ribosomal subunit. Forms a multimeric L10(L12)X complex, where L10 forms an elongated spine to which 2 to 4 L12 dimers bind in a sequential fashion. Binds GTP-bound translation factors.

Its function is as follows. Forms part of the ribosomal stalk which helps the ribosome interact with GTP-bound translation factors. Is thus essential for accurate translation. This is Large ribosomal subunit protein bL12 from Corynebacterium kroppenstedtii (strain DSM 44385 / JCM 11950 / CIP 105744 / CCUG 35717).